A 91-amino-acid polypeptide reads, in one-letter code: PqqA binding protein (91 aa).

Belongs to the PqqD family. Monomer. Interacts with PqqE.

It functions in the pathway cofactor biosynthesis; pyrroloquinoline quinone biosynthesis. Functions as a PqqA binding protein and presents PqqA to PqqE, in the pyrroloquinoline quinone (PQQ) biosynthetic pathway. The polypeptide is PqqA binding protein (Pseudomonas fluorescens (strain SBW25)).